The chain runs to 268 residues: M1-specific T cell receptor alpha chain (268 aa).

An N-terminal signal peptide occupies residues 1–19; sequence MVLKFSVSILWIQLAWVST. Positions 20 to 107 constitute an Ig-like V-type domain; the sequence is QLLEQSPQFL…QPGDTGLYLC (88 aa). The segment at 20 to 109 is t cell receptor alpha variable 27; sequence QLLEQSPQFL…GDTGLYLCAG (90 aa). N-linked (GlcNAc...) asparagine glycosylation is found at Asn-36 and Asn-42. Cys-41 and Cys-107 are oxidised to a cystine. Residues 45 to 49 form a CDR1 region; it reads SVFSS. Residues 67–69 form a CDR2 region; the sequence is VVT. A CDR3 region spans residues 107-118; sequence CAGGGSQGNLIF. Positions 110–128 are t cell receptor alpha joining 42; the sequence is GGSQGNLIFGKGTKLSVKP. Residues 129–268 are t cell receptor alpha constant; that stretch reads IQNPDPAVYQ…LLMTLRLWSS (140 aa). One can recognise an Ig-like C1-type domain in the interval 147-235; sequence KSVCLFTDFD…LVEKSFETDT (89 aa). The cysteines at positions 150 and 200 are disulfide-linked. N-linked (GlcNAc...) asparagine glycosylation is found at Asn-160, Asn-194, Asn-205, and Asn-241. The interval 222-243 is connecting peptide; that stretch reads CDVKLVEKSFETDTNLNFQNLS. Residues 244–266 traverse the membrane as a helical segment; it reads VIGFRILLLKVAGFNLLMTLRLW. At 267 to 268 the chain is on the cytoplasmic side; sequence SS.

As to quaternary structure, disulfide-linked heterodimer with TRBV19*01J2S7*01C*02 beta chain. The TR primarily interacts via its CDR3-beta domain with M/matrix protein 1-derived peptide (GILGFVFTL) displayed by HLA-A*02.01 in a 'peg-notch' recognition mode. The alpha-beta TR associates with the transmembrane signaling CD3 coreceptor proteins to form the TR-CD3 (TCR). The assembly of alpha-beta TR heterodimers with CD3 occurs in the endoplasmic reticulum where a single alpha-beta TR heterodimer associates with one CD3D-CD3E heterodimer, one CD3G-CD3E heterodimer and one CD247 homodimer forming a stable octameric structure. CD3D-CD3E and CD3G-CD3E heterodimers preferentially associate with TR alpha and TR beta chains (via TM domain), respectively. The association of the CD247 homodimer is the last step of TCR assembly in the endoplasmic reticulum and is required for transport to the cell surface. Expressed in M/matrix protein 1-specific effector and memory CD8-positive T cells readily detectable in the peripheral blood, secondary lymphoid organs and lung (primary site of infection) of IAV infected individuals.

It localises to the cell membrane. Its function is as follows. The alpha chain of TRAV27*01J42*01C*01/TRBV19*01J2S7*01C*02 alpha-beta T cell receptor (TR) clonotype that is specific for HLA-A*02:01-restricted M/matrix protein 1 immunodominant epitope GILGFVFTL of influenza A virus (IAV). Classified as a public TR clonotype, it is preferentially selected in effector memory CD8-positive T cells among multiple HLA-A*02:01 carriers and confers long-lived immunity against IAV infection. Can cross-recognize sporadically emerging IAV variants by molecular mimicry, inducing immunity toward different influenza strains. Antigen recognition initiates TR-CD3 clustering on the cell surface and intracellular activation of LCK that phosphorylates the ITAM motifs of CD3G, CD3D, CD3E and CD247 enabling the recruitment of ZAP70. In turn, ZAP70 phosphorylates LAT, which recruits numerous signaling molecules to form the LAT signalosome. The LAT signalosome propagates signal branching to three major signaling pathways, the calcium, the mitogen-activated protein kinase (MAPK) kinase and the nuclear factor NF-kappa-B (NF-kB) pathways, leading to the mobilization of transcription factors that are critical for gene expression and essential for T cell differentiation into effector/memory T cells. This chain is M1-specific T cell receptor alpha chain, found in Homo sapiens (Human).